A 1101-amino-acid polypeptide reads, in one-letter code: Protein unc-13 homolog (1101 aa).

Residues 663–804 (VSVFPAADSL…ASKDDLVPPV (142 aa)) enclose the MHD1 domain. An MHD2 domain is found at 941–1051 (QSRLEGLIEA…YETRELIDDL (111 aa)).

Belongs to the unc-13 family. As to expression, expressed in roots, cotyledons, leaves, stems and flowers. Expressed in guard cells and mesophyll cells of leaves.

The protein localises to the cytoplasm. It is found in the cell membrane. In terms of biological role, controls the tethering of the proton ATPase AHA1 to the plasma membrane. Is essential for stomatal opening in response to low concentration of carbon dioxide and light. In Arabidopsis thaliana (Mouse-ear cress), this protein is Protein unc-13 homolog.